The following is a 193-amino-acid chain: ATP-dependent Clp protease proteolytic subunit 1 (193 aa).

Ser-98 serves as the catalytic Nucleophile. The active site involves His-123.

The protein belongs to the peptidase S14 family. As to quaternary structure, fourteen ClpP subunits assemble into 2 heptameric rings which stack back to back to give a disk-like structure with a central cavity, resembling the structure of eukaryotic proteasomes.

It localises to the cytoplasm. It carries out the reaction Hydrolysis of proteins to small peptides in the presence of ATP and magnesium. alpha-casein is the usual test substrate. In the absence of ATP, only oligopeptides shorter than five residues are hydrolyzed (such as succinyl-Leu-Tyr-|-NHMec, and Leu-Tyr-Leu-|-Tyr-Trp, in which cleavage of the -Tyr-|-Leu- and -Tyr-|-Trp bonds also occurs).. Cleaves peptides in various proteins in a process that requires ATP hydrolysis. Has a chymotrypsin-like activity. Plays a major role in the degradation of misfolded proteins. This chain is ATP-dependent Clp protease proteolytic subunit 1, found in Bacillus cereus (strain ZK / E33L).